The chain runs to 339 residues: MVREEVAVSTRTLQWKCVESRTDSKRLSYGRFILSPLMKGQADMIGIAMRRALLGEIEGTCITRAKSDKIPHEYSTIVGIEESVHQILMNLKEIVLRSNLYGTCDASIFVRGPRCVTAQDIISPPSVKMVDTTQHIASLTEPIDLCIGLQIERDRGYRMKTPNNDQDGSYPIPIEAVSMPVRNANHSIHSYGNGNEKQEILFLEIWTNGSLTPKEALHEASHNLIDLFIPFLHGEEEDINLEDSLNRGTLPFFTFQDKLANLRKNKKAIALECIFIDQSELPPRTYNCLKRSNIHTLLDLLSNSQEDLMRIEHLRIEDVKRILDILQKHFTIDLPKNKF.

The tract at residues 1–235 (MVREEVAVST…DLFIPFLHGE (235 aa)) is alpha N-terminal domain (alpha-NTD). The alpha C-terminal domain (alpha-CTD) stretch occupies residues 267 to 339 (KAIALECIFI…FTIDLPKNKF (73 aa)).

This sequence belongs to the RNA polymerase alpha chain family. In terms of assembly, in plastids the minimal PEP RNA polymerase catalytic core is composed of four subunits: alpha, beta, beta', and beta''. When a (nuclear-encoded) sigma factor is associated with the core the holoenzyme is formed, which can initiate transcription.

The protein resides in the plastid. Its subcellular location is the chloroplast. The catalysed reaction is RNA(n) + a ribonucleoside 5'-triphosphate = RNA(n+1) + diphosphate. DNA-dependent RNA polymerase catalyzes the transcription of DNA into RNA using the four ribonucleoside triphosphates as substrates. This chain is DNA-directed RNA polymerase subunit alpha, found in Drimys granadensis.